The chain runs to 307 residues: Porphobilinogen deaminase (307 aa).

An S-(dipyrrolylmethanemethyl)cysteine modification is found at C239.

The protein belongs to the HMBS family. As to quaternary structure, monomer. It depends on dipyrromethane as a cofactor.

It catalyses the reaction 4 porphobilinogen + H2O = hydroxymethylbilane + 4 NH4(+). It functions in the pathway porphyrin-containing compound metabolism; protoporphyrin-IX biosynthesis; coproporphyrinogen-III from 5-aminolevulinate: step 2/4. In terms of biological role, tetrapolymerization of the monopyrrole PBG into the hydroxymethylbilane pre-uroporphyrinogen in several discrete steps. This is Porphobilinogen deaminase (hemC) from Campylobacter jejuni subsp. jejuni serotype O:2 (strain ATCC 700819 / NCTC 11168).